A 357-amino-acid chain; its full sequence is uncharacterized protein (357 aa).

Helical transmembrane passes span 21–41, 86–106, and 135–155; these read FIKI…LFSW, FFCL…CTLF, and GGFV…PVIF. Disordered regions lie at residues 184-229 and 283-357; these read DKNK…AMSD and KAGS…NKRN. Residues 195–223 show a composition bias toward low complexity; it reads TTNTTNFSGNGSSSSTTNATSSSSSQANN. Basic and acidic residues-rich tracts occupy residues 305–314 and 322–337; these read KIEEYDNQKQ and KETN…EKET. A coiled-coil region spans residues 305 to 337; that stretch reads KIEEYDNQKQEEEENEEKETNKQQTQKDDEKET. A compositionally biased stretch (basic residues) spans 346-357; that stretch reads KKSKKGKKNKRN.

The protein localises to the membrane. This is an uncharacterized protein from Dictyostelium discoideum (Social amoeba).